The chain runs to 654 residues: 4-hydroxy-3-methylbut-2-en-1-yl diphosphate synthase (flavodoxin) (654 aa).

4 residues coordinate [4Fe-4S] cluster: cysteine 557, cysteine 560, cysteine 591, and glutamate 598.

Belongs to the IspG family. [4Fe-4S] cluster is required as a cofactor.

The catalysed reaction is (2E)-4-hydroxy-3-methylbut-2-enyl diphosphate + oxidized [flavodoxin] + H2O + 2 H(+) = 2-C-methyl-D-erythritol 2,4-cyclic diphosphate + reduced [flavodoxin]. The protein operates within isoprenoid biosynthesis; isopentenyl diphosphate biosynthesis via DXP pathway; isopentenyl diphosphate from 1-deoxy-D-xylulose 5-phosphate: step 5/6. Converts 2C-methyl-D-erythritol 2,4-cyclodiphosphate (ME-2,4cPP) into 1-hydroxy-2-methyl-2-(E)-butenyl 4-diphosphate. The protein is 4-hydroxy-3-methylbut-2-en-1-yl diphosphate synthase (flavodoxin) of Protochlamydia amoebophila (strain UWE25).